The sequence spans 540 residues: GMP synthase [glutamine-hydrolyzing] (540 aa).

Residues 26-216 (IIIILDFGSQ…VYHICECEPT (191 aa)) enclose the Glutamine amidotransferase type-1 domain. Cys-103 serves as the catalytic Nucleophile. Residues His-190 and Glu-192 contribute to the active site. The GMPS ATP-PPase domain occupies 217-415 (WTTAAFVEEA…VGLPEEIVQR (199 aa)). 244–250 (SGGVDSS) lines the ATP pocket.

As to quaternary structure, homodimer.

It catalyses the reaction XMP + L-glutamine + ATP + H2O = GMP + L-glutamate + AMP + diphosphate + 2 H(+). It participates in purine metabolism; GMP biosynthesis; GMP from XMP (L-Gln route): step 1/1. In terms of biological role, catalyzes the synthesis of GMP from XMP. The protein is GMP synthase [glutamine-hydrolyzing] of Trichormus variabilis (strain ATCC 29413 / PCC 7937) (Anabaena variabilis).